A 38-amino-acid chain; its full sequence is Mating hormone A-factor 2 (38 aa).

The span at 1 to 12 (MQPITTASTQAT) shows a compositional bias: polar residues. The tract at residues 1–20 (MQPITTASTQATQKDKSSEK) is disordered. A propeptide spanning residues 1 to 23 (MQPITTASTQATQKDKSSEKKDN) is cleaved from the precursor. Cysteine methyl ester is present on C35. The S-farnesyl cysteine moiety is linked to residue C35. Positions 36–38 (VIA) are cleaved as a propeptide — removed in mature form.

Its subcellular location is the cell membrane. The active factor is excreted into the culture medium by haploid cells of the A mating type and acts on cells of the opposite mating type (type alpha). It mediates the conjugation process between the two types by inhibiting the initiation of DNA synthesis in type alpha cells and synchronizing them with type A. The chain is Mating hormone A-factor 2 (MFA2) from Saccharomyces cerevisiae (strain ATCC 204508 / S288c) (Baker's yeast).